The sequence spans 222 residues: GTP cyclohydrolase 1 (222 aa).

Zn(2+)-binding residues include cysteine 111, histidine 114, and cysteine 182.

Belongs to the GTP cyclohydrolase I family. In terms of assembly, homomer.

The catalysed reaction is GTP + H2O = 7,8-dihydroneopterin 3'-triphosphate + formate + H(+). It functions in the pathway cofactor biosynthesis; 7,8-dihydroneopterin triphosphate biosynthesis; 7,8-dihydroneopterin triphosphate from GTP: step 1/1. This chain is GTP cyclohydrolase 1, found in Salmonella gallinarum (strain 287/91 / NCTC 13346).